The sequence spans 1004 residues: Outer cell wall protein (1004 aa).

The N-terminal stretch at 1–24 (MNKKVVLSVLSTTLVASVAASAFA) is a signal peptide.

As to quaternary structure, the outer cell wall layer is composed of subunits of the outer cell wall protein. These proteins form a hexagonal array with a lattice constant of 14.5 nm in the outer cell wall layers.

Its subcellular location is the secreted. The protein localises to the cell wall. It localises to the S-layer. Its function is as follows. The outer wall protein binds to the middle cell wall protein. This is Outer cell wall protein from Brevibacillus brevis (strain 47 / JCM 6285 / NBRC 100599).